A 465-amino-acid chain; its full sequence is MKFLLVLVLLVSLQVSACGAAPMNESEFAEWYLSRFFDYQGDRIPMTKTKTNRNLLEEKLQEMQQFFGLEVTGQLDTSTLKIMHTSRCGVPDVQHLRAVPQRSRWMKRYLTYRIYNYTPDMKRADVDYIFQKAFQVWSDVTPLRFRKIHKGEADITILFAFGDHGDFYDFDGKGGTLAHAFYPGPGIQGDAHFDEAETWTKSFQGTNLFLVAVHELGHSLGLRHSNNPKSIMYPTYRYLHPNTFRLSADDIHSIQSLYGAPVKNPSLTNPGSPPSTVCHQSLSFDAVTTVGDKIFFFKDWFFWWRLPGSPATNITSISSMWPTIPSGIQAAYEIGGRNQLFLFKDEKYWLINNLVPEPHYPRSIHSLGFPASVKKIDAAVFDPLRQKVYFFVDKQYWRYDVRQELMDAAYPKLISTHFPGIRPKIDAVLYFKRHYYIFQGAYQLEYDPLLDRVTKTLSSTSWFGC.

Positions M1 to A21 are cleaved as a signal peptide. A propeptide spans P22–Q101 (activation peptide). Positions S86 to V93 match the Cysteine switch motif. Residue C88 coordinates Zn(2+). Residues D120 and D154 each contribute to the Ca(2+) site. The Zn(2+) site is built by H164 and D166. Residues D171, G172, G174, and T176 each coordinate Ca(2+). H179 provides a ligand contact to Zn(2+). Positions 186 and 190 each coordinate Ca(2+). H192 serves as a coordination point for Zn(2+). Ca(2+) is bound by residues D194, E195, and E197. H214 is a binding site for Zn(2+). E215 is a catalytic residue. Residues H218 and H224 each contribute to the Zn(2+) site. Cysteines 278 and 465 form a disulfide. Hemopexin repeat units lie at residues S281 to I324, P325 to A371, V373 to I421, and R422 to C465. Residue D285 participates in Ca(2+) binding. N313 is a glycosylation site (N-linked (GlcNAc...) asparagine). D377 and D426 together coordinate Ca(2+).

Belongs to the peptidase M10A family. Ca(2+) serves as cofactor. Zn(2+) is required as a cofactor.

The protein localises to the secreted. The protein resides in the extracellular space. Its subcellular location is the extracellular matrix. The catalysed reaction is Hydrolysis of soluble and insoluble elastin. Specific cleavages are also produced at 14-Ala-|-Leu-15 and 16-Tyr-|-Leu-17 in the B chain of insulin.. Its function is as follows. May be involved in tissue injury and remodeling. Has significant elastolytic activity. Can accept large and small amino acids at the P1' site, but has a preference for leucine. Aromatic or hydrophobic residues are preferred at the P1 site, with small hydrophobic residues (preferably alanine) occupying P3. The chain is Macrophage metalloelastase (Mmp12) from Rattus norvegicus (Rat).